Consider the following 124-residue polypeptide: Protein RibT (124 aa).

The 122-residue stretch at 3–124 folds into the N-acetyltransferase domain; sequence IRYKKSFEKI…QQDQDISYNN (122 aa).

Its function is as follows. Involved in riboflavin biosynthesis. The chain is Protein RibT (ribT) from Bacillus subtilis (strain 168).